The chain runs to 276 residues: Undecaprenyl-diphosphatase (276 aa).

Helical transmembrane passes span 43 to 63 (RAMAFNIIIQLGAILAVVWEF), 85 to 105 (LNLLIAFMPAVVLGVIFADTI), 109 to 129 (LFNAITVATALVVGGVIMLWA), 183 to 203 (AATEFSFFLAMPTMVGAAVYS), 218 to 238 (VFAIGFITSFVFAMIAVRALL), and 254 to 274 (IAFGLLILATWQFGWIDWASA).

The protein belongs to the UppP family.

It is found in the cell inner membrane. It catalyses the reaction di-trans,octa-cis-undecaprenyl diphosphate + H2O = di-trans,octa-cis-undecaprenyl phosphate + phosphate + H(+). Functionally, catalyzes the dephosphorylation of undecaprenyl diphosphate (UPP). Confers resistance to bacitracin. This is Undecaprenyl-diphosphatase from Pseudomonas syringae pv. tomato (strain ATCC BAA-871 / DC3000).